The sequence spans 473 residues: Zinc finger and BTB domain-containing protein 9 (473 aa).

One can recognise a BTB domain in the interval 48 to 112 (CDVSLLVQGR…IYSGRLRLPL (65 aa)). The disordered stretch occupies residues 177 to 279 (QTPVQSSAST…LELPAPPALP (103 aa)). The segment covering 182–196 (SSASTESPASTESPV) has biased composition (low complexity). The span at 211 to 226 (VEEEEEEEEDDDDEDQ) shows a compositional bias: acidic residues. The span at 227 to 239 (GSATLSQTPQPQR) shows a compositional bias: polar residues. Lys286 participates in a covalent cross-link: Glycyl lysine isopeptide (Lys-Gly) (interchain with G-Cter in SUMO1); alternate. A Glycyl lysine isopeptide (Lys-Gly) (interchain with G-Cter in SUMO2); alternate cross-link involves residue Lys286. Glycyl lysine isopeptide (Lys-Gly) (interchain with G-Cter in SUMO2) cross-links involve residues Lys293 and Lys307. Residues 293–376 (KEEISGSGTQ…VHGPVKLGGT (84 aa)) form a disordered region. Residues 355–364 (SGGGGPGGAG) are compositionally biased toward gly residues. Lys382 is covalently cross-linked (Glycyl lysine isopeptide (Lys-Gly) (interchain with G-Cter in SUMO2)). The C2H2-type 1 zinc-finger motif lies at 411-433 (FGCGICNKRFKLKHHLTEHMKTH). The C2H2-type 2; atypical zinc finger occupies 438–460 (HACPHCGRRFRVHACFLRHRDLC).

The protein localises to the nucleus. May be involved in transcriptional regulation. The protein is Zinc finger and BTB domain-containing protein 9 (ZBTB9) of Homo sapiens (Human).